A 167-amino-acid polypeptide reads, in one-letter code: Stress-related protein (167 aa).

The protein belongs to the REF/SRPP family.

Functionally, plays a role in plant defense. The chain is Stress-related protein (SRP) from Phaseolus vulgaris (Kidney bean).